A 539-amino-acid polypeptide reads, in one-letter code: Chaperonin GroEL (539 aa).

ATP-binding positions include 29-32 (TLGP), 86-90 (DGTTT), G413, and D492.

Belongs to the chaperonin (HSP60) family. Forms a cylinder of 14 subunits composed of two heptameric rings stacked back-to-back. Interacts with the co-chaperonin GroES.

It localises to the cytoplasm. It catalyses the reaction ATP + H2O + a folded polypeptide = ADP + phosphate + an unfolded polypeptide.. Together with its co-chaperonin GroES, plays an essential role in assisting protein folding. The GroEL-GroES system forms a nano-cage that allows encapsulation of the non-native substrate proteins and provides a physical environment optimized to promote and accelerate protein folding. The sequence is that of Chaperonin GroEL from Fusobacterium nucleatum subsp. polymorphum (Fusobacterium polymorphum).